Reading from the N-terminus, the 426-residue chain is Formate-dependent phosphoribosylglycinamide formyltransferase (426 aa).

Residues 26-27 (EL) and Glu86 each bind N(1)-(5-phospho-beta-D-ribosyl)glycinamide. ATP is bound by residues Arg118, Lys158, 197-200 (EEFI), and Glu205. The ATP-grasp domain maps to 123–324 (EAIASTGART…EFALHAKAVL (202 aa)). Residues Glu279 and Glu293 each coordinate Mg(2+). N(1)-(5-phospho-beta-D-ribosyl)glycinamide contacts are provided by residues Asp300, Lys374, and 381-382 (RR).

This sequence belongs to the PurK/PurT family. As to quaternary structure, homodimer.

It carries out the reaction N(1)-(5-phospho-beta-D-ribosyl)glycinamide + formate + ATP = N(2)-formyl-N(1)-(5-phospho-beta-D-ribosyl)glycinamide + ADP + phosphate + H(+). It functions in the pathway purine metabolism; IMP biosynthesis via de novo pathway; N(2)-formyl-N(1)-(5-phospho-D-ribosyl)glycinamide from N(1)-(5-phospho-D-ribosyl)glycinamide (formate route): step 1/1. Involved in the de novo purine biosynthesis. Catalyzes the transfer of formate to 5-phospho-ribosyl-glycinamide (GAR), producing 5-phospho-ribosyl-N-formylglycinamide (FGAR). Formate is provided by PurU via hydrolysis of 10-formyl-tetrahydrofolate. The polypeptide is Formate-dependent phosphoribosylglycinamide formyltransferase (Methanocella arvoryzae (strain DSM 22066 / NBRC 105507 / MRE50)).